The following is a 95-amino-acid chain: Osteocalcin-2 (95 aa).

The N-terminal stretch at 1–23 is a signal peptide; it reads MRTLSLLTLLALAALCLSDLTDA. Residues 24–49 constitute a propeptide that is removed on maturation; sequence KPSGPESDKAFMSKQEGNKVVNRLRR. A Gla domain is found at 46-92; sequence RLRRYLGASVPSPDPLEPTREQCELNPACDELSDQYGLKTAYKRIYG. Ca(2+) contacts are provided by glutamate 62, glutamate 66, glutamate 69, and aspartate 75. Cysteine 68 and cysteine 74 are oxidised to a cystine.

Belongs to the osteocalcin/matrix Gla protein family. In terms of processing, gamma-carboxyglutamate residues are formed by vitamin K dependent carboxylation by GGCX. These residues are essential for the binding of calcium. Carboxylated in a Ptprv/Esp-dependent process. Decarboxylation promotes the hormone activity. In terms of tissue distribution, bone.

It localises to the secreted. Functionally, the carboxylated form is one of the main organic components of the bone matrix, which constitutes 1-2% of the total bone protein: it acts as a negative regulator of bone formation and is required to limit bone formation without impairing bone resorption or mineralization. The carboxylated form binds strongly to apatite and calcium. Its function is as follows. The uncarboxylated form acts as a hormone secreted by osteoblasts, which regulates different cellular processes, such as energy metabolism, male fertility and brain development. Regulates of energy metabolism by acting as a hormone favoring pancreatic beta-cell proliferation, insulin secretion and sensitivity and energy expenditure. Uncarboxylated osteocalcin hormone also promotes testosterone production in the testes: acts as a ligand for G protein-coupled receptor GPRC6A at the surface of Leydig cells, initiating a signaling response that promotes the expression of enzymes required for testosterone synthesis in a CREB-dependent manner. Also acts as a regulator of brain development: osteocalcin hormone crosses the blood-brain barrier and acts as a ligand for GPR158 on neurons, initiating a signaling response that prevents neuronal apoptosis in the hippocampus, favors the synthesis of all monoamine neurotransmitters and inhibits that of gamma-aminobutyric acid (GABA). Osteocalcin also crosses the placenta during pregnancy and maternal osteocalcin is required for fetal brain development. This is Osteocalcin-2 (Bglap2) from Mus musculus (Mouse).